The chain runs to 354 residues: Methylthioribose-1-phosphate isomerase (354 aa).

Substrate contacts are provided by residues 54-56 (RGA), R97, and Q204. Residue D245 is the Proton donor of the active site. Position 255–256 (255–256 (NK)) interacts with substrate.

This sequence belongs to the eIF-2B alpha/beta/delta subunits family. MtnA subfamily.

The enzyme catalyses 5-(methylsulfanyl)-alpha-D-ribose 1-phosphate = 5-(methylsulfanyl)-D-ribulose 1-phosphate. It participates in amino-acid biosynthesis; L-methionine biosynthesis via salvage pathway; L-methionine from S-methyl-5-thio-alpha-D-ribose 1-phosphate: step 1/6. In terms of biological role, catalyzes the interconversion of methylthioribose-1-phosphate (MTR-1-P) into methylthioribulose-1-phosphate (MTRu-1-P). The chain is Methylthioribose-1-phosphate isomerase from Albidiferax ferrireducens (strain ATCC BAA-621 / DSM 15236 / T118) (Rhodoferax ferrireducens).